Here is a 608-residue protein sequence, read N- to C-terminus: Sensor protein kinase WalK (608 aa).

The next 2 helical transmembrane spans lie at 14-34 and 183-203; these read LVIVYVLLIIIGMQIIGLYFT and IFIVGTAISLLITVILGFFIA. The HAMP domain maps to 204 to 256; it reads RTITKPITDMRNQTVEMSRGNYTQRVKIYGNDEIGELALAFNNLSKRVQEAQA. The 71-residue stretch at 261–331 folds into the PAS domain; it reads EKRRLDSVIT…EIQENNDSFL (71 aa). The Zn(2+) site is built by His271, Asp274, His364, and Glu368. One can recognise a PAC domain in the interval 314–378; that stretch reads LEDEFKLEEI…QQQVERERRE (65 aa). The region spanning 382-600 is the Histidine kinase domain; the sequence is NVSHELRTPL…SIFITLPCEV (219 aa). Position 385 is a phosphohistidine; by autocatalysis (His385).

As to quaternary structure, forms homodimers. Forms homooligomers. In terms of processing, autophosphorylated.

The protein localises to the cell membrane. It carries out the reaction ATP + protein L-histidine = ADP + protein N-phospho-L-histidine.. With respect to regulation, by zinc. Zinc-binding negatively regulates WalK kinase activity and thus autophosphorylation. Member of the two-component regulatory system WalK/WalR that regulates genes involved in cell wall metabolism, virulence regulation, biofilm production, oxidative stress resistance and antibiotic resistance via direct or indirect regulation of autolysins. Functions as a sensor protein kinase which is autophosphorylated at a histidine residue in the dimerization domain and transfers its phosphate group to the conserved aspartic acid residue in the regulatory domain of WalR. In turn, WalR binds to the upstream promoter regions of the target genes to positively and negatively regulate their expression. This chain is Sensor protein kinase WalK (walK), found in Staphylococcus aureus (strain Mu3 / ATCC 700698).